Reading from the N-terminus, the 165-residue chain is ATP synthase subunit b (165 aa).

Residues 7–27 (STTIGDIIIVSGSVLLLFILI) traverse the membrane as a helical segment.

Belongs to the ATPase B chain family. As to quaternary structure, F-type ATPases have 2 components, F(1) - the catalytic core - and F(0) - the membrane proton channel. F(1) has five subunits: alpha(3), beta(3), gamma(1), delta(1), epsilon(1). F(0) has three main subunits: a(1), b(2) and c(10-14). The alpha and beta chains form an alternating ring which encloses part of the gamma chain. F(1) is attached to F(0) by a central stalk formed by the gamma and epsilon chains, while a peripheral stalk is formed by the delta and b chains.

It is found in the cell membrane. F(1)F(0) ATP synthase produces ATP from ADP in the presence of a proton or sodium gradient. F-type ATPases consist of two structural domains, F(1) containing the extramembraneous catalytic core and F(0) containing the membrane proton channel, linked together by a central stalk and a peripheral stalk. During catalysis, ATP synthesis in the catalytic domain of F(1) is coupled via a rotary mechanism of the central stalk subunits to proton translocation. Its function is as follows. Component of the F(0) channel, it forms part of the peripheral stalk, linking F(1) to F(0). The sequence is that of ATP synthase subunit b from Streptococcus agalactiae serotype Ia (strain ATCC 27591 / A909 / CDC SS700).